We begin with the raw amino-acid sequence, 223 residues long: Putative NAD(P)H nitroreductase SAB2397c (223 aa).

The protein belongs to the nitroreductase family. FMN serves as cofactor.

This chain is Putative NAD(P)H nitroreductase SAB2397c, found in Staphylococcus aureus (strain bovine RF122 / ET3-1).